A 33-amino-acid chain; its full sequence is MLFTLAWASLAAVFSFSIAMVVWGRNGDGTLNF.

The chain crosses the membrane as a helical span at residues 2–22; the sequence is LFTLAWASLAAVFSFSIAMVV.

This sequence belongs to the PetN family. The 4 large subunits of the cytochrome b6-f complex are cytochrome b6, subunit IV (17 kDa polypeptide, PetD), cytochrome f and the Rieske protein, while the 4 small subunits are PetG, PetL, PetM and PetN. The complex functions as a dimer.

The protein localises to the cellular thylakoid membrane. Component of the cytochrome b6-f complex, which mediates electron transfer between photosystem II (PSII) and photosystem I (PSI), cyclic electron flow around PSI, and state transitions. The protein is Cytochrome b6-f complex subunit 8 of Synechococcus sp. (strain WH7803).